The sequence spans 387 residues: Carboxyaminopropylagmatine decarboxylase (387 aa).

Lys-52 carries the post-translational modification N6-(pyridoxal phosphate)lysine.

The protein belongs to the Orn/Lys/Arg decarboxylase class-II family. Pyridoxal 5'-phosphate serves as cofactor.

It catalyses the reaction N(1)-[(S)-3-amino-3-carboxypropyl]agmatine + H(+) = N(1)-(3-aminopropyl)agmatine + CO2. Its pathway is amine and polyamine biosynthesis; spermidine biosynthesis. Functionally, decarboxylase involved in the biosynthesis of spermidine via the carboxyaminopropylagmatine (CAPA) pathway. Catalyzes the decarboxylation of CAPA to form aminopropylagmatine (APA). Can also decarboxylate carboxyspermidine and carboxynorspermidine, but not ornithine, arginine, lysine and meso-diaminopimelate. The polypeptide is Carboxyaminopropylagmatine decarboxylase (Synechocystis sp. (strain ATCC 27184 / PCC 6803 / Kazusa)).